Reading from the N-terminus, the 833-residue chain is Kinesin-like protein KIFC3 (833 aa).

The tract at residues 19–74 (LWRVGRAPEPEPGMARPAPAPASPAARPFPHTGPGRLRTGRGKDTPVCGDEDSSAR) is disordered. A compositionally biased stretch (low complexity) spans 30–48 (PGMARPAPAPASPAARPFP). Coiled-coil stretches lie at residues 102–362 (LTLQ…ENLA) and 395–432 (LLQEALRSVKAEIGQAIEEVNSNNQELLRKYRRELQLR). The region spanning 445-768 (NIRVIARVRP…LKFAERVRSV (324 aa)) is the Kinesin motor domain. Residue 528–535 (GQTGAGKT) participates in ATP binding. The tract at residues 786 to 833 (EHLEWEPACQTPQPSARAHSAPSSGTSSRPGSIRRKLQPSGKSRPLPV) is disordered. Positions 806–815 (APSSGTSSRP) are enriched in polar residues. Phosphoserine occurs at positions 813 and 817.

This sequence belongs to the TRAFAC class myosin-kinesin ATPase superfamily. Kinesin family.

The protein resides in the cell junction. It is found in the adherens junction. It localises to the cytoplasm. The protein localises to the cytoskeleton. Its subcellular location is the microtubule organizing center. The protein resides in the centrosome. It is found in the cytoplasmic vesicle membrane. In terms of biological role, minus-end microtubule-dependent motor protein. Involved in apically targeted transport. Required for zonula adherens maintenance. This Homo sapiens (Human) protein is Kinesin-like protein KIFC3 (KIFC3).